Consider the following 307-residue polypeptide: Protoheme IX farnesyltransferase (307 aa).

The next 9 membrane-spanning stretches (helical) occupy residues 29 to 49 (VISL…RGWP), 51 to 71 (LGLL…AGVF), 101 to 120 (AAIF…WVWA), 124 to 143 (AAWM…TLWL), 151 to 171 (IVLG…AVTG), 179 to 199 (FLFA…ALMI), 218 to 238 (RLTV…SVMP), 239 to 259 (VFLG…GWLL), and 280 to 300 (VAVP…VAGA).

The protein belongs to the UbiA prenyltransferase family. Protoheme IX farnesyltransferase subfamily.

Its subcellular location is the cell membrane. It carries out the reaction heme b + (2E,6E)-farnesyl diphosphate + H2O = Fe(II)-heme o + diphosphate. It functions in the pathway porphyrin-containing compound metabolism; heme O biosynthesis; heme O from protoheme: step 1/1. Functionally, converts heme B (protoheme IX) to heme O by substitution of the vinyl group on carbon 2 of heme B porphyrin ring with a hydroxyethyl farnesyl side group. In Deinococcus geothermalis (strain DSM 11300 / CIP 105573 / AG-3a), this protein is Protoheme IX farnesyltransferase.